The sequence spans 287 residues: CBK1 kinase activator protein MOB2 (287 aa).

The tract at residues 1-89 is disordered; it reads MSFFNFKAFG…QQQEASERSE (89 aa). Tyr33 carries the post-translational modification Phosphotyrosine. Residues 34 to 44 show a composition bias toward low complexity; it reads SSPHSSNSRLS. Residues 45–56 are compositionally biased toward basic residues; that stretch reads LRNKHHSPKRHS. Phosphoserine is present on Ser59. Low complexity predominate over residues 63-83; it reads QKSTPQSQQLTSTTPQSQQQE. A Phosphothreonine modification is found at Thr76.

It belongs to the MOB1/phocein family. In terms of assembly, interacts with protein kinase CBK1 to form the RAM CBK1-MOB2 kinase complex.

Its subcellular location is the nucleus. It localises to the cytoplasm. Functions as an activator subunit for the CBK1 protein kinase. Part of the regulation of ACE2 activity and cellular morphogenesis (RAM) signaling network. Required for coordinating polarized cell growth during interphase with the onset of mitosis. Required for mother/daughter cell separation after cytokinesis. Also has a role in the prevention of nuclear export of ACE2 from the daughter cell nucleus after mitotic exit. It coordinates ACE2-dependent transcription with mitotic exit network activation. The chain is CBK1 kinase activator protein MOB2 (MOB2) from Saccharomyces cerevisiae (strain ATCC 204508 / S288c) (Baker's yeast).